A 378-amino-acid chain; its full sequence is Mitogen-activated protein kinase mpkC (378 aa).

The region spanning 20–300 is the Protein kinase domain; it reads YVNPQPIGMG…AQDALRHPYL (281 aa). ATP contacts are provided by residues 26 to 34 and K49; that span reads IGMGSFGLV. D141 serves as the catalytic Proton acceptor.

The protein belongs to the protein kinase superfamily. Ser/Thr protein kinase family. MAP kinase subfamily. The cofactor is Mg(2+).

It is found in the nucleus. The enzyme catalyses L-seryl-[protein] + ATP = O-phospho-L-seryl-[protein] + ADP + H(+). It carries out the reaction L-threonyl-[protein] + ATP = O-phospho-L-threonyl-[protein] + ADP + H(+). Its activity is regulated as follows. Activated by threonine and tyrosine phosphorylation. In terms of biological role, mitogen-activated protein kinase (MAPK), part of the high-osmolarity glycerol (HOG) pathway. With sakA, plays a role in the osmotic and oxidative stress responses. Involved in paradoxical growth, the cell wall integrity (CWI) pathway and biofilm formation. SakA and mpkC collaborate during virulence and mpkC could act by modulating sakA activity upon exposure to several types of stresses and during cell wall biosynthesis. This Aspergillus fumigatus (strain CBS 144.89 / FGSC A1163 / CEA10) (Neosartorya fumigata) protein is Mitogen-activated protein kinase mpkC.